Consider the following 91-residue polypeptide: Small ribosomal subunit protein uS19 (91 aa).

Belongs to the universal ribosomal protein uS19 family.

Protein S19 forms a complex with S13 that binds strongly to the 16S ribosomal RNA. This is Small ribosomal subunit protein uS19 from Hahella chejuensis (strain KCTC 2396).